Reading from the N-terminus, the 1412-residue chain is DNA-directed RNA polymerase subunit beta' (1412 aa).

Residues cysteine 71, cysteine 73, cysteine 86, and cysteine 89 each coordinate Zn(2+). 3 residues coordinate Mg(2+): aspartate 461, aspartate 463, and aspartate 465. Positions 815, 889, 896, and 899 each coordinate Zn(2+).

It belongs to the RNA polymerase beta' chain family. The RNAP catalytic core consists of 2 alpha, 1 beta, 1 beta' and 1 omega subunit. When a sigma factor is associated with the core the holoenzyme is formed, which can initiate transcription. It depends on Mg(2+) as a cofactor. Requires Zn(2+) as cofactor.

The enzyme catalyses RNA(n) + a ribonucleoside 5'-triphosphate = RNA(n+1) + diphosphate. Functionally, DNA-dependent RNA polymerase catalyzes the transcription of DNA into RNA using the four ribonucleoside triphosphates as substrates. The sequence is that of DNA-directed RNA polymerase subunit beta' from Actinobacillus pleuropneumoniae serotype 5b (strain L20).